The primary structure comprises 417 residues: Voltage-gated ClC-type chloride channel ClcB (417 aa).

Transmembrane regions (helical) follow at residues 5–25 (LLIATLIGILAALAVAAFRHA), 54–74 (LITPALGGLAAGLLLWGWQKM), 146–166 (LWIASGAAAGMAGAYHAPLAG), 168–188 (LFIAEILFGTLMLASLGPVVV), 222–242 (VMIVSTGLVAGLCGPLLMWLM), 258–278 (WQLALGGLIVGLLSLLTPTVW), 288–308 (FLLSPPLFSLIGGIFACKILA), 316–336 (GAPGGVFTPTLFVGLSIGMFL), 349–371 (EIAILLGLAGMATLLAATTHAPI), and 380–400 (MTGEYQLLPGLLIACVVASVL).

This sequence belongs to the chloride channel (TC 2.A.49) family. ClcB subfamily.

It is found in the cell inner membrane. Functionally, probably acts as an electrical shunt for an outwardly-directed proton pump that is linked to amino acid decarboxylation, as part of the extreme acid resistance (XAR) response. The sequence is that of Voltage-gated ClC-type chloride channel ClcB from Salmonella dublin (strain CT_02021853).